The chain runs to 456 residues: tRNA modification GTPase MnmE (456 aa).

The (6S)-5-formyl-5,6,7,8-tetrahydrofolate site is built by Arg-24, Glu-81, and Lys-120. Residues 216–379 (GMTVVIAGRP…LRDHLKACMG (164 aa)) enclose the TrmE-type G domain. Residue Asn-226 coordinates K(+). Residues 226 to 231 (NAGKSS), 245 to 251 (TEIAGTT), 270 to 273 (DTAG), and 335 to 338 (NKAD) contribute to the GTP site. Ser-230 is a Mg(2+) binding site. Positions 245, 247, and 250 each coordinate K(+). Residue Thr-251 participates in Mg(2+) binding. Lys-456 provides a ligand contact to (6S)-5-formyl-5,6,7,8-tetrahydrofolate.

The protein belongs to the TRAFAC class TrmE-Era-EngA-EngB-Septin-like GTPase superfamily. TrmE GTPase family. Homodimer. Heterotetramer of two MnmE and two MnmG subunits. Requires K(+) as cofactor.

The protein localises to the cytoplasm. Its function is as follows. Exhibits a very high intrinsic GTPase hydrolysis rate. Involved in the addition of a carboxymethylaminomethyl (cmnm) group at the wobble position (U34) of certain tRNAs, forming tRNA-cmnm(5)s(2)U34. In Pseudomonas fluorescens (strain Pf0-1), this protein is tRNA modification GTPase MnmE.